We begin with the raw amino-acid sequence, 138 residues long: Large ribosomal subunit protein uL14 (138 aa).

This sequence belongs to the universal ribosomal protein uL14 family. As to quaternary structure, part of the 50S ribosomal subunit. Forms a cluster with proteins L3 and L24e, part of which may contact the 16S rRNA in 2 intersubunit bridges.

Binds to 23S rRNA. Forms part of two intersubunit bridges in the 70S ribosome. The polypeptide is Large ribosomal subunit protein uL14 (Metallosphaera sedula (strain ATCC 51363 / DSM 5348 / JCM 9185 / NBRC 15509 / TH2)).